The primary structure comprises 906 residues: Glutamate receptor 1 (906 aa).

A signal peptide spans 1–18; the sequence is MQHIFAFFCTGFLGAVVG. Residues 19-536 lie on the Extracellular side of the membrane; sequence ANFPNNIQIG…GVFSFLDPLA (518 aa). Residues Asn-63, Asn-249, Asn-257, Asn-363, Asn-401, and Asn-406 are each glycosylated (N-linked (GlcNAc...) asparagine). A disulfide bridge links Cys-75 with Cys-323. Pro-492, Thr-494, and Arg-499 together coordinate L-glutamate. The chain crosses the membrane as a helical span at residues 537 to 557; that stretch reads YEIWMCIVFAYIGVSVVLFLV. Over 558–584 the chain is Cytoplasmic; that stretch reads SRFSPYEWHSEEFEEGRDQTTSDQSNE. The segment at residues 585–600 is an intramembrane region (helical; Pore-forming); the sequence is FGIFNSLWFSLGAFMQ. The stretch at 601–603 is an intramembrane region; it reads QGC. The S-palmitoyl cysteine moiety is linked to residue Cys-603. At 604-609 the chain is on the cytoplasmic side; it reads DISPRS. Residues 610–630 form a helical membrane-spanning segment; that stretch reads LSGRIVGGVWWFFTLIIISSY. At 631–805 the chain is on the extracellular side; sequence TANLAAFLTV…DKTSALSLSN (175 aa). Ser-645 is subject to Phosphoserine. L-glutamate contacts are provided by Ser-668 and Thr-669. At Ser-710 the chain carries Phosphoserine. Glu-719 is an L-glutamate binding site. Cys-732 and Cys-787 are disulfide-bonded. The chain crosses the membrane as a helical span at residues 806–826; sequence VAGVFYILIGGLGLAMLVALI. Topologically, residues 827 to 906 are cytoplasmic; that stretch reads EFCYKSRSES…SGMPLGATGL (80 aa). The S-palmitoyl cysteine moiety is linked to residue Cys-829. Phosphoserine occurs at positions 849 and 863. The interval 861-880 is disordered; it reads RNSGAGASSAGSGENGRVVS. Over residues 863–872 the composition is skewed to low complexity; it reads SGAGASSAGS. Positions 903-906 match the PDZ-binding motif; that stretch reads ATGL.

It belongs to the glutamate-gated ion channel (TC 1.A.10.1) family. GRIA1 subfamily. As to quaternary structure, homotetramer or heterotetramer of pore-forming glutamate receptor subunits; heteromeric assembly can be the result of both receptor subtype and flip-flop forms and according the composition, one partner can be dominant with respect to the fast desensitizing current component, whereas the other can determine the steady-state component. Tetramers may be formed by the dimerization of dimers. Found in a complex with GRIA2, GRIA3, GRIA4, CNIH2, CNIH3, CACNG2, CACNG3, CACNG4, CACNG5, CACNG7 and CACNG8. Interacts with HIP1 and RASGRF2. Interacts with SYNDIG1 and GRIA2. Interacts with DLG1 (via C-terminus). Interacts with LRFN1. Interacts with PRKG2. Interacts with CNIH2 and CACNG2. Interacts with CACNG5; this interaction modulates the gating. Interacts (via C-terminus) with PDLIM4 (via LIM domain); this interaction as well as the interaction of PDLIM4 with alpha-actinin is required for their colocalization in early endosomes. Interacts with SNX27 (via PDZ domain); the interaction is required for recycling to the plasma membrane when endocytosed and prevent degradation in lysosomes. Interacts (via PDZ-binding motif) with SHANK3 (via PDZ domain). Interacts with CACNG3; associates GRIA1 with the adapter protein complex 4 (AP-4) to target GRIA1 to the somatodendritic compartment of neurons. Interacts with CACNG2; this interaction mediates traffick to the plasma membrane and modulation of desensitization. Interaction with CNIH2 and CNIH3; this interaction promotes expression at the plasma membrane and extensively modulates their gating properties by slowing deactivation and desensitization kinetics. Found in a complex with GRIA2, GRIA3, GRIA4, DLG4, CACNG8 and CNIH2. In terms of processing, phosphorylated at Ser-645. Phosphorylated at Ser-710 by PKC. Phosphorylated at Ser-849 by PKC, PKA and CAMK2. Phosphorylated at Ser-863 by PKC, PKA and PRKG2. Phosphorylation of Ser-863 is reduced by induction of long-term depression and increased by induction of long-term potentiation. Palmitoylated. Depalmitoylated by CPT1C and upon L-glutamate stimulation. ZDHHC3/GODZ specifically palmitoylates Cys-603, which leads to Golgi retention and decreased cell surface expression. In contrast, Cys-829 palmitoylation does not affect cell surface expression but regulates stimulation-dependent endocytosis.

The protein localises to the cell membrane. It localises to the endoplasmic reticulum membrane. Its subcellular location is the postsynaptic cell membrane. It is found in the postsynaptic density membrane. The protein resides in the cell projection. The protein localises to the dendrite. It localises to the dendritic spine. Its subcellular location is the early endosome membrane. It is found in the recycling endosome membrane. The protein resides in the presynapse. The protein localises to the synapse. The enzyme catalyses Ca(2+)(in) = Ca(2+)(out). It carries out the reaction Na(+)(in) = Na(+)(out). It catalyses the reaction Mg(2+)(in) = Mg(2+)(out). The catalysed reaction is Li(+)(in) = Li(+)(out). The enzyme catalyses K(+)(in) = K(+)(out). It carries out the reaction Sr(2+)(in) = Sr(2+)(out). Ionotropic glutamate receptor that functions as a ligand-gated cation channel, gated by L-glutamate and glutamatergic agonists such as alpha-amino-3-hydroxy-5-methyl-4-isoxazolepropionic acid (AMPA), quisqualic acid, and kainic acid. L-glutamate acts as an excitatory neurotransmitter at many synapses in the central nervous system. Binding of the excitatory neurotransmitter L-glutamate induces a conformation change, leading to the opening of the cation channel, and thereby converts the chemical signal to an electrical impulse upon entry of monovalent and divalent cations such as sodium and calcium. The receptor then desensitizes rapidly and enters in a transient inactive state, characterized by the presence of bound agonist. In the presence of CACNG2 or CACNG4 or CACNG7 or CACNG8, shows resensitization which is characterized by a delayed accumulation of current flux upon continued application of L-glutamate. Calcium (Ca(2+)) permeability depends on subunits composition and, heteromeric channels containing edited GRIA2 subunit are calcium-impermeable. Also permeable to other divalents cations such as strontium(2+) and magnesium(2+) and monovalent cations such as potassium(1+) and lithium(1+). The sequence is that of Glutamate receptor 1 from Macaca fascicularis (Crab-eating macaque).